Consider the following 291-residue polypeptide: Stomatin-like protein 3 (291 aa).

The residue at position 7 (Ser7) is a Phosphoserine. Residues 29–49 (WILFSLSFLLVIITFPISIWM) form a helical; Signal-anchor for type III membrane protein membrane-spanning segment. The Cytoplasmic segment spans residues 50 to 291 (CLKIIKEYER…DNHKKLPNKA (242 aa)). Ser241 bears the Phosphoserine mark.

Belongs to the band 7/mec-2 family. In terms of assembly, homodimer. Interacts with PIEZO1 and PIEZO2.

The protein localises to the cell membrane. Functionally, required for the function of many mechanoreceptors. Modulate mechanotransduction channels and acid-sensing ion channels (ASIC) proteins. Potentiates PIEZO1 and PIEZO2 function by increasing their sensitivity to mechanical stimulations. The polypeptide is Stomatin-like protein 3 (STOML3) (Homo sapiens (Human)).